The following is a 586-amino-acid chain: NudC domain-containing protein 1 (586 aa).

A disordered region spans residues 259–278 (KDQPESSEDEKMDEDNKREP). Residues 275–364 (KREPLYNWHQ…EPGSTWAELV (90 aa)) enclose the CS domain.

It is found in the cytoplasm. Its subcellular location is the nucleus. The protein is NudC domain-containing protein 1 of Xenopus tropicalis (Western clawed frog).